A 105-amino-acid polypeptide reads, in one-letter code: uncharacterized protein (105 aa).

It belongs to the M.jannaschii MJ0023/MJ0349/MJ1072/MJ1074/MJ1107/MJECL16 family.

This is an uncharacterized protein from Methanocaldococcus jannaschii (strain ATCC 43067 / DSM 2661 / JAL-1 / JCM 10045 / NBRC 100440) (Methanococcus jannaschii).